The chain runs to 450 residues: ATP-dependent protease ATPase subunit HslU (450 aa).

ATP-binding positions include valine 29, 71 to 76 (GVGKTE), aspartate 261, glutamate 328, and arginine 400.

It belongs to the ClpX chaperone family. HslU subfamily. As to quaternary structure, a double ring-shaped homohexamer of HslV is capped on each side by a ring-shaped HslU homohexamer. The assembly of the HslU/HslV complex is dependent on binding of ATP.

The protein resides in the cytoplasm. ATPase subunit of a proteasome-like degradation complex; this subunit has chaperone activity. The binding of ATP and its subsequent hydrolysis by HslU are essential for unfolding of protein substrates subsequently hydrolyzed by HslV. HslU recognizes the N-terminal part of its protein substrates and unfolds these before they are guided to HslV for hydrolysis. In Rickettsia canadensis (strain McKiel), this protein is ATP-dependent protease ATPase subunit HslU.